The sequence spans 226 residues: Probable proteasome subunit beta type-1 (226 aa).

Positions 1 to 24 are cleaved as a propeptide — removed in mature form; sequence MATTVKDTMNVDINAIKKGEIRMG. Thr-25 (nucleophile) is an active-site residue.

This sequence belongs to the peptidase T1B family. As to quaternary structure, the 26S proteasome consists of a 20S proteasome core and two 19S regulatory subunits. The 20S proteasome core is composed of 28 subunits that are arranged in four stacked rings, resulting in a barrel-shaped structure. The two end rings are each formed by seven alpha subunits, and the two central rings are each formed by seven beta subunits. The catalytic chamber with the active sites is on the inside of the barrel.

It is found in the cytoplasm. The protein resides in the nucleus. It carries out the reaction Cleavage of peptide bonds with very broad specificity.. In terms of biological role, the proteasome is a multicatalytic proteinase complex which is characterized by its ability to cleave peptides with Arg, Phe, Tyr, Leu, and Glu adjacent to the leaving group at neutral or slightly basic pH. The proteasome has an ATP-dependent proteolytic activity. The chain is Probable proteasome subunit beta type-1 (pre3) from Schizosaccharomyces pombe (strain 972 / ATCC 24843) (Fission yeast).